Here is a 96-residue protein sequence, read N- to C-terminus: Large ribosomal subunit protein bL27 (96 aa).

Positions 1-9 (MLRLDLQFF) are excised as a propeptide.

Belongs to the bacterial ribosomal protein bL27 family. Post-translationally, the N-terminus is cleaved by ribosomal processing cysteine protease Prp.

The polypeptide is Large ribosomal subunit protein bL27 (Geobacillus kaustophilus (strain HTA426)).